A 239-amino-acid chain; its full sequence is Calcium load-activated calcium channel (239 aa).

Residues 1 to 55 (MPRKRKCDLRAVRVGLLLGGGGVYGSRFRFTFPGCRALSPWRVRVQRRRCEMSTM) lie on the Lumenal side of the membrane. Residues 56–83 (FADTLLIVFISVCTALLAEGITWVLVYR) traverse the membrane as a helical segment. Residues 83-140 (RTDKYKRLKAEVEKQSKKLEKKKETITESAGRQQKKKIERQEEKLKNNNRDLSMVRMK) are a coiled coil. The Cytoplasmic segment spans residues 84-137 (TDKYKRLKAEVEKQSKKLEKKKETITESAGRQQKKKIERQEEKLKNNNRDLSMV). Ser111 carries the phosphoserine modification. A helical membrane pass occupies residues 138–157 (RMKSMFAIGFCFTALMGMFN). Residues 158–171 (SIFDGRVVAKLPFT) are Lumenal-facing. The stretch at 172 to 181 (PLSYIQGLSH) is an intramembrane region. At 182-191 (RNLLGDDTTD) the chain is on the lumenal side. A helical membrane pass occupies residues 192–213 (CSFIFLYILCTMSIRQNIQKIL). Over 214–239 (GLAPSRAATKQAGGFLGPPPPSGKFS) the chain is Cytoplasmic. Residue Ser239 is modified to Phosphoserine.

The protein belongs to the TMCO1 family. In terms of assembly, homodimer and homotetramer. Homodimer under resting conditions; forms homotetramers following ER calcium overload. Component of the GET- and EMC-like (GEL) complex, composed of RAB5IF/OPTI and TMCO1. The GEL complex is part of the multi-pass translocon (MPT) complex, composed of three subcomplexes, the GEL complex (composed of RAB5IF/OPTI and TMCO1), the BOS complex (composed of NCLN/Nicalin, NOMO and TMEM147) and the PAT complex (composed of WDR83OS/Asterix and CCDC47). The MPT complex associates with the SEC61 complex. Widely expressed in adult and fetal tissues, with higher levels in thymus, prostate, testis and small intestine and lower levels in brain, placenta, lung and kidney. Present in most tissues in the eye, including the trabecular meshwork and retina (at protein level).

It localises to the endoplasmic reticulum membrane. The protein localises to the golgi apparatus membrane. It is found in the mitochondrion membrane. It catalyses the reaction Ca(2+)(in) = Ca(2+)(out). Endoplasmic reticulum (ER) calcium-selective channel preventing intracellular Ca2(+) stores from overfilling and maintaining calcium homeostasis in the ER. In response to endoplasmic reticulum (ER) Ca2(+) overloading, assembles into a homotetramer, forming a functional calcium-selective channel facilitating Ca2(+) release. Mediates ER Ca2(+) homeostasis in osteoblasts and plays a key role in bone formation, via the CaMKII-HDAC4-RUNX2 signaling axis. Component of the multi-pass translocon (MPT) complex that mediates insertion of multi-pass membrane proteins into the lipid bilayer of membranes. The MPT complex takes over after the SEC61 complex: following membrane insertion of the first few transmembrane segments of proteins by the SEC61 complex, the MPT complex occludes the lateral gate of the SEC61 complex to promote insertion of subsequent transmembrane regions. Within the MPT complex, the GEL subcomplex may mediate insertion of transmembrane regions into the membrane. This Homo sapiens (Human) protein is Calcium load-activated calcium channel.